The primary structure comprises 239 residues: Uridylate kinase (239 aa).

An ATP-binding site is contributed by 10–13 (KLSG). The tract at residues 18 to 23 (GEDGYG) is involved in allosteric activation by GTP. Residue Gly52 participates in UMP binding. 2 residues coordinate ATP: Gly53 and Arg57. Residues Asp72 and 133 to 140 (TGNPYFTT) each bind UMP. ATP is bound by residues Thr160, Tyr166, and Asp169.

The protein belongs to the UMP kinase family. As to quaternary structure, homohexamer.

The protein resides in the cytoplasm. It carries out the reaction UMP + ATP = UDP + ADP. It functions in the pathway pyrimidine metabolism; CTP biosynthesis via de novo pathway; UDP from UMP (UMPK route): step 1/1. Its activity is regulated as follows. Allosterically activated by GTP. Inhibited by UTP. Catalyzes the reversible phosphorylation of UMP to UDP. This is Uridylate kinase from Chlorobium chlorochromatii (strain CaD3).